Here is a 267-residue protein sequence, read N- to C-terminus: Ribosomal RNA small subunit methyltransferase A (267 aa).

S-adenosyl-L-methionine-binding residues include N18, L20, G45, E66, D91, and N112.

This sequence belongs to the class I-like SAM-binding methyltransferase superfamily. rRNA adenine N(6)-methyltransferase family. RsmA subfamily.

It is found in the cytoplasm. It catalyses the reaction adenosine(1518)/adenosine(1519) in 16S rRNA + 4 S-adenosyl-L-methionine = N(6)-dimethyladenosine(1518)/N(6)-dimethyladenosine(1519) in 16S rRNA + 4 S-adenosyl-L-homocysteine + 4 H(+). Its function is as follows. Specifically dimethylates two adjacent adenosines (A1518 and A1519) in the loop of a conserved hairpin near the 3'-end of 16S rRNA in the 30S particle. May play a critical role in biogenesis of 30S subunits. This Shewanella pealeana (strain ATCC 700345 / ANG-SQ1) protein is Ribosomal RNA small subunit methyltransferase A.